The chain runs to 250 residues: Urease accessory protein UreG 3 (250 aa).

Residues 1–24 are disordered; that stretch reads MPDNASAQQPGQPAQGPNEHYHQP. A compositionally biased stretch (low complexity) spans 7-17; the sequence is AQQPGQPAQGP. 37-44 provides a ligand contact to GTP; that stretch reads GPVGTGKS. Residues 230–250 form a disordered region; that stretch reads GTHVPTDPGPMAPHSHSHDGS.

Belongs to the SIMIBI class G3E GTPase family. UreG subfamily. Homodimer. UreD, UreF and UreG form a complex that acts as a GTP-hydrolysis-dependent molecular chaperone, activating the urease apoprotein by helping to assemble the nickel containing metallocenter of UreC. The UreE protein probably delivers the nickel.

The protein resides in the cytoplasm. Its function is as follows. Facilitates the functional incorporation of the urease nickel metallocenter. This process requires GTP hydrolysis, probably effectuated by UreG. The polypeptide is Urease accessory protein UreG 3 (Streptomyces griseus subsp. griseus (strain JCM 4626 / CBS 651.72 / NBRC 13350 / KCC S-0626 / ISP 5235)).